The primary structure comprises 555 residues: La-related protein 7 (555 aa).

The region spanning 36 to 127 is the HTH La-type RNA-binding domain; sequence RSRVKQLLSD…RRKEPLGETP (92 aa). The region spanning 133 to 211 is the RRM domain; the sequence is RTVYVELLPK…PRKPGIFPKT (79 aa). The tract at residues 218–327 is disordered; that stretch reads PFDAVTQDND…ENKDEELNSL (110 aa). 3 stretches are compositionally biased toward polar residues: residues 238 to 251, 258 to 274, and 284 to 293; these read KNSTSEETGSNNMD, STVTSEPNLATLTSTVS, and SQSFEASSGE. Residues 295–356 are a coiled coil; that stretch reads QFEMSSKMRK…ERLKVGEEVI (62 aa). The span at 303-327 shows a compositional bias: basic and acidic residues; it reads RKVEEEKSELKDLSSENKDEELNSL. The 114-residue stretch at 425–538 folds into the xRRM domain; sequence EFLSGVIVKI…TEKLISKAEK (114 aa).

The protein belongs to the LARP7 family. In terms of assembly, core component of the 7SK RNP complex. Associates with box C/D small nucleolar ribonucleoprotein (snoRNP) complexes.

Its subcellular location is the nucleus. The protein localises to the nucleoplasm. RNA-binding protein that specifically binds distinct small nuclear RNA (snRNAs) and regulates their processing and function. Specifically binds the 7SK snRNA (7SK RNA) and acts as a core component of the 7SK ribonucleoprotein (RNP) complex, thereby acting as a negative regulator of transcription elongation by RNA polymerase II. The 7SK RNP complex sequesters the positive transcription elongation factor b (P-TEFb) in a large inactive 7SK RNP complex preventing RNA polymerase II phosphorylation and subsequent transcriptional elongation. The 7SK RNP complex also promotes snRNA gene transcription by RNA polymerase II via interaction with the little elongation complex (LEC). LARP7 specifically binds to the highly conserved 3'-terminal U-rich stretch of 7SK RNA; on stimulation, remains associated with 7SK RNA, whereas P-TEFb is released from the complex. LARP7 also acts as a regulator of mRNA splicing fidelity by promoting U6 snRNA processing. Specifically binds U6 snRNAs and associates with a subset of box C/D RNP complexes: promotes U6 snRNA 2'-O-methylation by facilitating U6 snRNA loading into box C/D RNP complexes. U6 snRNA 2'-O-methylation is required for mRNA splicing fidelity. The protein is La-related protein 7 of Danio rerio (Zebrafish).